A 225-amino-acid polypeptide reads, in one-letter code: RNA chaperone ProQ (225 aa).

The segment at 107–169 is disordered; it reads KARVQAQRAA…VAAKAPREER (63 aa). A compositionally biased stretch (low complexity) spans 109-118; the sequence is RVQAQRAAQQ. A compositionally biased stretch (basic residues) spans 137–146; it reads RERKPRPQQP. Positions 147 to 156 are enriched in basic and acidic residues; the sequence is RRKEGAEQRK.

Belongs to the ProQ family.

The protein localises to the cytoplasm. RNA chaperone with significant RNA binding, RNA strand exchange and RNA duplexing activities. May regulate ProP activity through an RNA-based, post-transcriptional mechanism. The chain is RNA chaperone ProQ from Klebsiella pneumoniae subsp. pneumoniae (strain ATCC 700721 / MGH 78578).